Here is a 299-residue protein sequence, read N- to C-terminus: NADH-cytochrome b5 reductase 2 (299 aa).

A helical membrane pass occupies residues 13–35; the sequence is SFKVLAPFAAAVGSVGIAYQYST. The region spanning 50 to 154 is the FAD-binding FR-type domain; the sequence is DEWIDLKLAK…KGPVVKWKWE (105 aa). 157–192 serves as a coordination point for FAD; that stretch reads QYKSIALIGGGTGITPLYQLMHEITKNPEDKTKVNL.

Belongs to the flavoprotein pyridine nucleotide cytochrome reductase family. FAD serves as cofactor.

It is found in the mitochondrion outer membrane. It carries out the reaction 2 Fe(III)-[cytochrome b5] + NADH = 2 Fe(II)-[cytochrome b5] + NAD(+) + H(+). May mediate the reduction of outer membrane cytochrome b5. The sequence is that of NADH-cytochrome b5 reductase 2 (MCR1) from Debaryomyces hansenii (strain ATCC 36239 / CBS 767 / BCRC 21394 / JCM 1990 / NBRC 0083 / IGC 2968) (Yeast).